A 143-amino-acid chain; its full sequence is Transcriptional regulator MraZ (143 aa).

2 consecutive SpoVT-AbrB domains span residues 5-47 (EYNH…SSDE) and 76-119 (ASEC…SNVE).

The protein belongs to the MraZ family. In terms of assembly, forms oligomers.

Its subcellular location is the cytoplasm. The protein localises to the nucleoid. The protein is Transcriptional regulator MraZ of Alkaliphilus oremlandii (strain OhILAs) (Clostridium oremlandii (strain OhILAs)).